We begin with the raw amino-acid sequence, 232 residues long: Orotidine 5'-phosphate decarboxylase (232 aa).

Residues Asp-13, Lys-35, 62–71 (DLKFHDIPNT), Thr-121, Arg-182, Gln-191, Gly-211, and Arg-212 contribute to the substrate site. The active-site Proton donor is the Lys-64.

Belongs to the OMP decarboxylase family. Type 1 subfamily. As to quaternary structure, homodimer.

The enzyme catalyses orotidine 5'-phosphate + H(+) = UMP + CO2. Its pathway is pyrimidine metabolism; UMP biosynthesis via de novo pathway; UMP from orotate: step 2/2. Functionally, catalyzes the decarboxylation of orotidine 5'-monophosphate (OMP) to uridine 5'-monophosphate (UMP). The polypeptide is Orotidine 5'-phosphate decarboxylase (Acinetobacter baumannii (strain ACICU)).